We begin with the raw amino-acid sequence, 760 residues long: Xaa-Pro dipeptidyl-peptidase (760 aa).

Residues serine 349, aspartate 469, and histidine 499 each act as charge relay system in the active site.

Belongs to the peptidase S15 family. Homodimer.

It is found in the cytoplasm. The catalysed reaction is Hydrolyzes Xaa-Pro-|- bonds to release unblocked, N-terminal dipeptides from substrates including Ala-Pro-|-p-nitroanilide and (sequentially) Tyr-Pro-|-Phe-Pro-|-Gly-Pro-|-Ile.. Its function is as follows. Removes N-terminal dipeptides sequentially from polypeptides having unsubstituted N-termini provided that the penultimate residue is proline. This chain is Xaa-Pro dipeptidyl-peptidase, found in Streptococcus pyogenes serotype M5 (strain Manfredo).